The chain runs to 295 residues: Succinate dehydrogenase assembly factor 2, mitochondrial (295 aa).

Disordered stretches follow at residues Ala35–Leu90, Pro208–Ala227, and Thr269–Ser295. The segment covering Ser45–Asn75 has biased composition (polar residues).

This sequence belongs to the SDHAF2 family. As to quaternary structure, interacts with the flavoprotein subunit within the SDH catalytic dimer.

The protein resides in the mitochondrion matrix. Plays an essential role in the assembly of succinate dehydrogenase (SDH), an enzyme complex (also referred to as respiratory complex II) that is a component of both the tricarboxylic acid (TCA) cycle and the mitochondrial electron transport chain, and which couples the oxidation of succinate to fumarate with the reduction of ubiquinone (coenzyme Q) to ubiquinol. Required for flavinylation (covalent attachment of FAD) of the flavoprotein subunit of the SDH catalytic dimer. The sequence is that of Succinate dehydrogenase assembly factor 2, mitochondrial from Aspergillus terreus (strain NIH 2624 / FGSC A1156).